Reading from the N-terminus, the 193-residue chain is Peptidyl-tRNA hydrolase (193 aa).

Y15 contacts tRNA. The active-site Proton acceptor is the H20. Positions 65, 67, and 113 each coordinate tRNA.

Belongs to the PTH family. Monomer.

It localises to the cytoplasm. The enzyme catalyses an N-acyl-L-alpha-aminoacyl-tRNA + H2O = an N-acyl-L-amino acid + a tRNA + H(+). Its function is as follows. Hydrolyzes ribosome-free peptidyl-tRNAs (with 1 or more amino acids incorporated), which drop off the ribosome during protein synthesis, or as a result of ribosome stalling. Functionally, catalyzes the release of premature peptidyl moieties from peptidyl-tRNA molecules trapped in stalled 50S ribosomal subunits, and thus maintains levels of free tRNAs and 50S ribosomes. This chain is Peptidyl-tRNA hydrolase, found in Ehrlichia canis (strain Jake).